Reading from the N-terminus, the 289-residue chain is Probable branched-chain-amino-acid aminotransferase (289 aa).

At lysine 154 the chain carries N6-(pyridoxal phosphate)lysine.

This sequence belongs to the class-IV pyridoxal-phosphate-dependent aminotransferase family. The cofactor is pyridoxal 5'-phosphate.

The catalysed reaction is L-leucine + 2-oxoglutarate = 4-methyl-2-oxopentanoate + L-glutamate. The enzyme catalyses L-isoleucine + 2-oxoglutarate = (S)-3-methyl-2-oxopentanoate + L-glutamate. It carries out the reaction L-valine + 2-oxoglutarate = 3-methyl-2-oxobutanoate + L-glutamate. It participates in amino-acid biosynthesis; L-isoleucine biosynthesis; L-isoleucine from 2-oxobutanoate: step 4/4. The protein operates within amino-acid biosynthesis; L-leucine biosynthesis; L-leucine from 3-methyl-2-oxobutanoate: step 4/4. It functions in the pathway amino-acid biosynthesis; L-valine biosynthesis; L-valine from pyruvate: step 4/4. In terms of biological role, acts on leucine, isoleucine and valine. This is Probable branched-chain-amino-acid aminotransferase (ilvE) from Rickettsia bellii (strain RML369-C).